We begin with the raw amino-acid sequence, 283 residues long: Thymidylate synthase (283 aa).

Arg-22 lines the dUMP pocket. Cys-160 (nucleophile) is an active-site residue. DUMP contacts are provided by residues 180 to 183 (RSCD), Asn-191, and 221 to 223 (HIY). A (6R)-5,10-methylene-5,6,7,8-tetrahydrofolate-binding site is contributed by Asp-183. Ser-282 lines the (6R)-5,10-methylene-5,6,7,8-tetrahydrofolate pocket.

Belongs to the thymidylate synthase family. Bacterial-type ThyA subfamily. As to quaternary structure, homodimer.

It localises to the cytoplasm. It catalyses the reaction dUMP + (6R)-5,10-methylene-5,6,7,8-tetrahydrofolate = 7,8-dihydrofolate + dTMP. It participates in pyrimidine metabolism; dTTP biosynthesis. Catalyzes the reductive methylation of 2'-deoxyuridine-5'-monophosphate (dUMP) to 2'-deoxythymidine-5'-monophosphate (dTMP) while utilizing 5,10-methylenetetrahydrofolate (mTHF) as the methyl donor and reductant in the reaction, yielding dihydrofolate (DHF) as a by-product. This enzymatic reaction provides an intracellular de novo source of dTMP, an essential precursor for DNA biosynthesis. This Shewanella loihica (strain ATCC BAA-1088 / PV-4) protein is Thymidylate synthase.